The sequence spans 284 residues: Large ribosomal subunit protein uL2 (284 aa).

Disordered stretches follow at residues E28–S50 and R232–K284. Positions R36 to F46 are enriched in basic residues. Residues D240 to H250 show a composition bias toward basic and acidic residues. The segment covering K264–K284 has biased composition (basic residues).

It belongs to the universal ribosomal protein uL2 family. In terms of assembly, part of the 50S ribosomal subunit. Forms a bridge to the 30S subunit in the 70S ribosome.

In terms of biological role, one of the primary rRNA binding proteins. Required for association of the 30S and 50S subunits to form the 70S ribosome, for tRNA binding and peptide bond formation. It has been suggested to have peptidyltransferase activity; this is somewhat controversial. Makes several contacts with the 16S rRNA in the 70S ribosome. The chain is Large ribosomal subunit protein uL2 from Chlamydia trachomatis serovar L2 (strain ATCC VR-902B / DSM 19102 / 434/Bu).